The primary structure comprises 31 residues: Potassium channel toxin alpha-KTx 5.5 (31 aa).

Intrachain disulfides connect cysteine 3–cysteine 21, cysteine 8–cysteine 26, and cysteine 12–cysteine 28. The tract at residues 6 to 9 is [R/K]XCQ motif; it reads RRCE. The residue at position 31 (histidine 31) is a Histidine amide.

As to expression, expressed by the venom gland.

Its subcellular location is the secreted. In terms of biological role, blocks small conductance calcium-activated potassium channels. This is Potassium channel toxin alpha-KTx 5.5 from Hottentotta tamulus (Eastern Indian scorpion).